Here is a 126-residue protein sequence, read N- to C-terminus: UPF0102 protein BH12350 (126 aa).

It belongs to the UPF0102 family.

The sequence is that of UPF0102 protein BH12350 from Bartonella henselae (strain ATCC 49882 / DSM 28221 / CCUG 30454 / Houston 1) (Rochalimaea henselae).